Reading from the N-terminus, the 370-residue chain is Pyruvate dehydrogenase E1 component subunit alpha (370 aa).

Heterodimer of an alpha and a beta chain. Thiamine diphosphate serves as cofactor.

It catalyses the reaction N(6)-[(R)-lipoyl]-L-lysyl-[protein] + pyruvate + H(+) = N(6)-[(R)-S(8)-acetyldihydrolipoyl]-L-lysyl-[protein] + CO2. Functionally, the pyruvate dehydrogenase complex catalyzes the overall conversion of pyruvate to acetyl-CoA and CO(2). It contains multiple copies of three enzymatic components: pyruvate dehydrogenase (E1), dihydrolipoamide acetyltransferase (E2) and lipoamide dehydrogenase (E3). This Staphylococcus aureus (strain COL) protein is Pyruvate dehydrogenase E1 component subunit alpha (pdhA).